The following is a 153-amino-acid chain: Prostaglandin E synthase (153 aa).

Over 1 to 13 (MPSPGLVMESGQV) the chain is Lumenal. Residues 14 to 42 (LPAFLLCSTLLVIKMYAVAVITGQMRLRK) form a helical membrane-spanning segment. A glutathione-binding site is contributed by Arg-39. At 43 to 61 (KAFANPEDALKRGGLQYYR) the chain is on the cytoplasmic side. The chain crosses the membrane as a helical span at residues 62 to 91 (SDPDVERCLRAHRNDMETIYPFLFLGFVYS). 74-78 (RNDME) contributes to the glutathione binding site. Residues 92–96 (FLGPN) lie on the Lumenal side of the membrane. Residues 97–120 (PLIAWIHFLVVLTGRVVHTVAYLG) form a helical membrane-spanning segment. 2 residues coordinate glutathione: His-114 and Tyr-118. The Cytoplasmic portion of the chain corresponds to 121–124 (KLNP). A helical transmembrane segment spans residues 125-153 (RLRSGAYVLAQFSCFSMALQILWEVAHHL). Residue 127–131 (RSGAY) coordinates glutathione.

This sequence belongs to the MAPEG family. Homotrimer. Requires glutathione as cofactor.

It localises to the membrane. The protein resides in the cytoplasm. Its subcellular location is the perinuclear region. It carries out the reaction prostaglandin H2 = prostaglandin E2. The enzyme catalyses 2-glyceryl-prostaglandin H2 = 2-glyceryl-prostaglandin E2. The catalysed reaction is prostaglandin G2 = (15S)-15-hydroperoxy-prostaglandin E2. It catalyses the reaction 1-chloro-2,4-dinitrobenzene + glutathione = 2,4-dinitrophenyl-S-glutathione + chloride + H(+). It carries out the reaction (5S)-hydroperoxy-(6E,8Z,11Z,14Z)-eicosatetraenoate + 2 glutathione = (5S)-hydroxy-(6E,8Z,11Z,14Z)-eicosatetraenoate + glutathione disulfide + H2O. The protein operates within lipid metabolism; prostaglandin biosynthesis. Activity is increased markedly in macrophages and osteoblasts following pro-inflammatory stimuli. In terms of biological role, terminal enzyme of the cyclooxygenase (COX)-2-mediated prostaglandin E2 (PGE2) biosynthetic pathway. Catalyzes the glutathione-dependent oxidoreduction of prostaglandin endoperoxide H2 (PGH2) to prostaglandin E2 (PGE2) in response to inflammatory stimuli. Plays a key role in inflammation response, fever and pain. Also catalyzes the oxidoreduction of endocannabinoids into prostaglandin glycerol esters and PGG2 into 15-hydroperoxy-PGE2. In addition, displays low glutathione transferase and glutathione-dependent peroxidase activities, toward 1-chloro-2,4-dinitrobenzene and 5-hydroperoxyicosatetraenoic acid (5-HPETE), respectively. The polypeptide is Prostaglandin E synthase (Ptges) (Mus musculus (Mouse)).